The sequence spans 143 residues: Large-conductance mechanosensitive channel (143 aa).

Transmembrane regions (helical) follow at residues 16–36 (VIDL…VTAL) and 84–104 (INTV…VKLI).

The protein belongs to the MscL family. In terms of assembly, homopentamer.

It localises to the cell inner membrane. Its function is as follows. Channel that opens in response to stretch forces in the membrane lipid bilayer. May participate in the regulation of osmotic pressure changes within the cell. This is Large-conductance mechanosensitive channel from Xanthomonas axonopodis pv. citri (strain 306).